The chain runs to 211 residues: MLTIALSKGRILDDTLPLLAEAGIVPTENPDKSRKLIIPTTQDDVRLLIVRATDVPTYVEHGAADLGVAGKDVLMEYGGQGLYEPLDLQIAQCKLMTAGVVGAPEPKGRLRVATKFVNVAKRYYAEQGRQVDIIKLYGSMELAPLINLADKIIDVVDTGNTLRANGLEPQELIATISSRLVVNKASMKMQHARIQNLIDTLRQAVESRHRG.

The protein belongs to the ATP phosphoribosyltransferase family. Short subfamily. In terms of assembly, heteromultimer composed of HisG and HisZ subunits.

It localises to the cytoplasm. It catalyses the reaction 1-(5-phospho-beta-D-ribosyl)-ATP + diphosphate = 5-phospho-alpha-D-ribose 1-diphosphate + ATP. The protein operates within amino-acid biosynthesis; L-histidine biosynthesis; L-histidine from 5-phospho-alpha-D-ribose 1-diphosphate: step 1/9. In terms of biological role, catalyzes the condensation of ATP and 5-phosphoribose 1-diphosphate to form N'-(5'-phosphoribosyl)-ATP (PR-ATP). Has a crucial role in the pathway because the rate of histidine biosynthesis seems to be controlled primarily by regulation of HisG enzymatic activity. The protein is ATP phosphoribosyltransferase of Pseudomonas putida (strain GB-1).